The primary structure comprises 628 residues: 3-hydroxy-3-methylglutaryl-coenzyme A reductase 2 (628 aa).

A run of 2 helical transmembrane segments spans residues 38-58 (PLYL…YFLL) and 78-98 (EIVA…FFGI). The segment at 99–212 (DFVQSLIIRP…HEKTVIVTTE (114 aa)) is linker. N-linked (GlcNAc...) asparagine glycosylation occurs at Asn153. Positions 213 to 628 (EDEEIIKSVV…SSKDMSNLSS (416 aa)) are catalytic. Glu307 functions as the Charge relay system in the catalytic mechanism. Asn371 carries N-linked (GlcNAc...) asparagine glycosylation. Lys439 acts as the Charge relay system in catalysis. N-linked (GlcNAc...) asparagine glycosylation is present at Asn484. Asp515 functions as the Charge relay system in the catalytic mechanism. His613 (proton donor) is an active-site residue. N-linked (GlcNAc...) asparagine glycans are attached at residues Asn617 and Asn625.

The protein belongs to the HMG-CoA reductase family.

The protein localises to the endoplasmic reticulum membrane. The protein resides in the mitochondrion membrane. It is found in the plastid membrane. The enzyme catalyses (R)-mevalonate + 2 NADP(+) + CoA = (3S)-3-hydroxy-3-methylglutaryl-CoA + 2 NADPH + 2 H(+). It participates in metabolic intermediate biosynthesis; (R)-mevalonate biosynthesis; (R)-mevalonate from acetyl-CoA: step 3/3. Functionally, catalyzes the synthesis of mevalonate. The specific precursor of all isoprenoid compounds present in plants. The protein is 3-hydroxy-3-methylglutaryl-coenzyme A reductase 2 (HMG2) of Gossypium hirsutum (Upland cotton).